We begin with the raw amino-acid sequence, 199 residues long: Glycerol-3-phosphate acyltransferase (199 aa).

Transmembrane regions (helical) follow at residues 4–24, 51–71, 77–97, 111–131, and 152–172; these read LVSV…FLMG, WAAL…AYLG, EWGF…PVWL, VMLL…ALAV, and LFLL…AVVI.

This sequence belongs to the PlsY family. As to quaternary structure, probably interacts with PlsX.

It is found in the cell membrane. The catalysed reaction is an acyl phosphate + sn-glycerol 3-phosphate = a 1-acyl-sn-glycero-3-phosphate + phosphate. It participates in lipid metabolism; phospholipid metabolism. Catalyzes the transfer of an acyl group from acyl-phosphate (acyl-PO(4)) to glycerol-3-phosphate (G3P) to form lysophosphatidic acid (LPA). This enzyme utilizes acyl-phosphate as fatty acyl donor, but not acyl-CoA or acyl-ACP. The sequence is that of Glycerol-3-phosphate acyltransferase from Symbiobacterium thermophilum (strain DSM 24528 / JCM 14929 / IAM 14863 / T).